Reading from the N-terminus, the 382-residue chain is B3 domain-containing protein Os03g0622100 (382 aa).

Residues 29-123 (CKHFLTYMVG…SFDVLIFDPS (95 aa)) constitute a DNA-binding region (TF-B3 1). Composition is skewed to basic and acidic residues over residues 136–158 (RGFG…DKNG) and 193–202 (QDHREEKKEG). The tract at residues 136-222 (RGFGREEKSA…EDVDKDGEDR (87 aa)) is disordered. Over residues 203 to 218 (DDEDEDEDEDEDVDKD) the composition is skewed to acidic residues. The TF-B3 2 DNA-binding region spans 261-363 (KVIHASHLLS…AGDRLRRRPR (103 aa)).

It is found in the nucleus. The polypeptide is B3 domain-containing protein Os03g0622100 (Oryza sativa subsp. japonica (Rice)).